A 292-amino-acid chain; its full sequence is Formamidopyrimidine-DNA glycosylase (292 aa).

The active-site Schiff-base intermediate with DNA is Pro-2. The active-site Proton donor is the Glu-3. Catalysis depends on Lys-58, which acts as the Proton donor; for beta-elimination activity. Residues His-103, Arg-122, and Lys-165 each contribute to the DNA site. The FPG-type zinc-finger motif lies at 256–292 (RVYDRALHPCPTPGCKGEISRITQGGRSSFFCSMCQK). Arg-282 (proton donor; for delta-elimination activity) is an active-site residue.

It belongs to the FPG family. Monomer. The cofactor is Zn(2+).

The enzyme catalyses Hydrolysis of DNA containing ring-opened 7-methylguanine residues, releasing 2,6-diamino-4-hydroxy-5-(N-methyl)formamidopyrimidine.. It catalyses the reaction 2'-deoxyribonucleotide-(2'-deoxyribose 5'-phosphate)-2'-deoxyribonucleotide-DNA = a 3'-end 2'-deoxyribonucleotide-(2,3-dehydro-2,3-deoxyribose 5'-phosphate)-DNA + a 5'-end 5'-phospho-2'-deoxyribonucleoside-DNA + H(+). Its function is as follows. Involved in base excision repair of DNA damaged by oxidation or by mutagenic agents. Acts as a DNA glycosylase that recognizes and removes damaged bases. Has a preference for oxidized purines, such as 7,8-dihydro-8-oxoguanine (8-oxoG). Has AP (apurinic/apyrimidinic) lyase activity and introduces nicks in the DNA strand. Cleaves the DNA backbone by beta-delta elimination to generate a single-strand break at the site of the removed base with both 3'- and 5'-phosphates. In Methylocella silvestris (strain DSM 15510 / CIP 108128 / LMG 27833 / NCIMB 13906 / BL2), this protein is Formamidopyrimidine-DNA glycosylase.